A 590-amino-acid chain; its full sequence is Ras-specific guanine nucleotide-releasing factor RalGPS2 (590 aa).

Residues 49–287 enclose the Ras-GEF domain; it reads TPEEYAGQIT…YKLSLKIEPG (239 aa). Residues 288–319 form a disordered region; sequence ASTPRSAASREDLAGPDIGASPQGGRKSSAAA. Phosphoserine occurs at positions 293, 296, and 308. Positions 331 to 334 match the PXXP motif; sequence PQTP. A Phosphothreonine modification is found at Thr-333. 2 positions are modified to phosphoserine: Ser-336 and Ser-350. Thr-368 carries the post-translational modification Phosphothreonine. The tract at residues 380–413 is disordered; it reads DSVMEPHAPSRGQAESSTLSSGISIGSSDGSELS. Position 381 is a phosphoserine (Ser-381). Residues 394-410 show a composition bias toward low complexity; that stretch reads ESSTLSSGISIGSSDGS. Ser-429 bears the Phosphoserine mark. One can recognise a PH domain in the interval 464-576; sequence AVTIQGVLRR…WFKHLSAACQ (113 aa). Residues 466 to 590 are required for stimulation of nucleotide exchange by RALA; that stretch reads TIQGVLRRKT…QVPTNLMTFE (125 aa).

Interacts with RALA. Interacts with the SH3 domains of GRB2 and PLCG1. Abundant in brain and testis.

It is found in the cytoplasm. Its subcellular location is the cell membrane. In terms of biological role, guanine nucleotide exchange factor for the small GTPase RALA. May be involved in cytoskeletal organization. May also be involved in the stimulation of transcription in a Ras-independent fashion. The chain is Ras-specific guanine nucleotide-releasing factor RalGPS2 (Ralgps2) from Mus musculus (Mouse).